The chain runs to 458 residues: NADH-ubiquinone oxidoreductase chain 4 (458 aa).

The next 13 membrane-spanning stretches (helical) occupy residues 22 to 42 (FFWT…FIFT), 63 to 83 (MISA…ALAS), 96 to 116 (LLYI…FLST), 117 to 137 (NLMN…LIIF), 150 to 170 (IYLS…LLFL), 194 to 214 (ILWL…GFHL), 224 to 244 (TIAG…YGMI), 257 to 277 (LSLI…FICL), 284 to 306 (ALIA…TLSL), 311 to 333 (GAFI…ANSN), 350 to 370 (MLLP…LAMP), 391 to 413 (LTFP…MFML), and 434 to 454 (LTLF…NMII).

The protein belongs to the complex I subunit 4 family.

The protein resides in the mitochondrion membrane. It catalyses the reaction a ubiquinone + NADH + 5 H(+)(in) = a ubiquinol + NAD(+) + 4 H(+)(out). Core subunit of the mitochondrial membrane respiratory chain NADH dehydrogenase (Complex I) that is believed to belong to the minimal assembly required for catalysis. Complex I functions in the transfer of electrons from NADH to the respiratory chain. The immediate electron acceptor for the enzyme is believed to be ubiquinone. The polypeptide is NADH-ubiquinone oxidoreductase chain 4 (MT-ND4) (Myxine glutinosa (Atlantic hagfish)).